The chain runs to 551 residues: MDLSRSAAWSALVSHRQEVEQLHMRDMFMSDHDRFKHFSIRWNGLLLDYSKNRINSRTMGLLVELARQANLIEARDGMFAGEKINFTENRAVLHTALRRQPGYTLNVDGLDVPAEVDSVLRQMKAFTDKVVGGEWKGYTGKRITDVVNIGIGGSDLGPCMVTEALRPFADGAIAVHFVSNIDGTHVSEVLKRVDAETTLFVIASKTFTTQETLTNSMTAREWFLSRAIDPAHIALHFAAVSTNRTKVVEFGIDPENMFRFWDWVGGRYSLWSAIGLSIALYLGFEAFQELLRGARAMDEHFQEAPLEENIPVILALLGVWYNNFFDVPSHAVIPYDQYLHRLPAYLQQLDMESNGKRVDRLGNTVEYPTGPIIWGEPGTNSQHAFFQLLHQGTGFIPADFILPLKTQNPIGEHHDILVANCFAQTEALMRGKSASEASEELAAAGVDEETMQMLVAHKVFPGNRPTNTLLLDEINPFTLGSLIAMYEHKVFVQGVIWQVNSFDQWGVELGKQLAKAILPELQSQKESDAHDASTNALINSYRSYREGQKVG.

Glu352 (proton donor) is an active-site residue. Residues His383 and Lys511 contribute to the active site.

It belongs to the GPI family.

The protein resides in the cytoplasm. The catalysed reaction is alpha-D-glucose 6-phosphate = beta-D-fructose 6-phosphate. Its pathway is carbohydrate biosynthesis; gluconeogenesis. It participates in carbohydrate degradation; glycolysis; D-glyceraldehyde 3-phosphate and glycerone phosphate from D-glucose: step 2/4. Functionally, catalyzes the reversible isomerization of glucose-6-phosphate to fructose-6-phosphate. In Chlorobium luteolum (strain DSM 273 / BCRC 81028 / 2530) (Pelodictyon luteolum), this protein is Glucose-6-phosphate isomerase.